The chain runs to 959 residues: Translation initiation factor IF-2 (959 aa).

The span at 1 to 10 (MSDKTNDDKT) shows a compositional bias: basic and acidic residues. Residues 1–374 (MSDKTNDDKT…SQMQETREKI (374 aa)) are disordered. The span at 27–37 (EQSTVRQNFSH) shows a compositional bias: polar residues. 2 stretches are compositionally biased toward low complexity: residues 63-118 (AAAA…VTKP) and 128-138 (QRPGGQQAQRP). Basic and acidic residues-rich tracts occupy residues 154–225 (SEMD…EAAK) and 232–241 (ARSERRDDAR). Residues 246–284 (GARPQQAGRPQGGRPQPAGRPQQGSPRPAPIIADAAPIA) show a composition bias toward low complexity. A compositionally biased stretch (basic and acidic residues) spans 318–333 (PEVRAPKVVKGEDDRR). The region spanning 457–626 (SRPPVVTIMG…LLQAEMLDLK (170 aa)) is the tr-type G domain. Residues 466–473 (GHVDHGKT) are G1. Position 466-473 (466-473 (GHVDHGKT)) interacts with GTP. The interval 491-495 (GITQH) is G2. The G3 stretch occupies residues 512–515 (DTPG). Residues 512-516 (DTPGH) and 566-569 (NKID) contribute to the GTP site. Residues 566–569 (NKID) are G4. The interval 602–604 (SAK) is G5.

The protein belongs to the TRAFAC class translation factor GTPase superfamily. Classic translation factor GTPase family. IF-2 subfamily.

It is found in the cytoplasm. In terms of biological role, one of the essential components for the initiation of protein synthesis. Protects formylmethionyl-tRNA from spontaneous hydrolysis and promotes its binding to the 30S ribosomal subunits. Also involved in the hydrolysis of GTP during the formation of the 70S ribosomal complex. In Brucella melitensis biotype 1 (strain ATCC 23456 / CCUG 17765 / NCTC 10094 / 16M), this protein is Translation initiation factor IF-2.